The primary structure comprises 960 residues: Collagenase ColA (960 aa).

Residues 1 to 30 (MNKNLRFTQMMIGISTMALSFGSIQTQVSA) form the signal peptide. The propeptide occupies 31–92 (EETAPYNILQ…KRDEIQLKQS (62 aa)). The interval 93–365 (YTLAELNKMP…AVEQMKTNYG (273 aa)) is activator domain. The tract at residues 93–764 (YTLAELNKMP…VFHGVATEEK (672 aa)) is S1 metalloprotease domain. Positions 375–644 (DLQKIREEGK…MQQLIDNQDK (270 aa)) are catalytic subdomain. His-500 serves as a coordination point for Zn(2+). Residue Glu-501 is part of the active site. The Zn(2+) site is built by His-504 and Glu-532. A helper subdomain region spans residues 652-764 (NDYLIQHAPK…VFHGVATEEK (113 aa)). Residues 768–849 (TTIVNMNGPY…ESKEQTKVTV (82 aa)) form the PKD domain. Basic and acidic residues predominate over residues 836-845 (SRGKESKEQT). The interval 836–859 (SRGKESKEQTKVTVKQDPQTSESY) is disordered. Residues 846-857 (KVTVKQDPQTSE) show a composition bias toward polar residues. The interval 852–960 (DPQTSESYEE…KNGEYSLLVK (109 aa)) is collagen-binding domain.

The protein belongs to the peptidase M9B family. Collagenase subfamily. Requires Ca(2+) as cofactor. Zn(2+) serves as cofactor.

The protein resides in the secreted. It catalyses the reaction Digestion of native collagen in the triple helical region at Xaa-|-Gly bonds. With synthetic peptides, a preference is shown for Gly at P3 and P1', Pro and Ala at P2 and P2', and hydroxyproline, Ala or Arg at P3'.. Its function is as follows. Acts as a true collagenase, which is highly active and efficiently targets native tropocollagen. In vitro, can also cleave gelatin and the synthetic peptide FALGPA (furylacryloyl-Leu-Gly-Pro-Ala). May contribute to bacterial virulence in endophthalmitis or opportunistic infections via collagen degradation in the host extracellular matrix (ECM). The polypeptide is Collagenase ColA (Bacillus cereus (strain ATCC 14579 / DSM 31 / CCUG 7414 / JCM 2152 / NBRC 15305 / NCIMB 9373 / NCTC 2599 / NRRL B-3711)).